A 284-amino-acid polypeptide reads, in one-letter code: MDAIKKKMQMLKLDKENALDRAEQAEADKKAAEERSKQLEDELVALQKKLKGTEDELDKYSESLKDAQEKLELADKKATDAESEVASLNRRIQLVEEELDRAQERLATALQKLEEAEKAADESERGMKVIENRAQKDEEKMEIQEIQLKEAKHIAEEADRKYEEVARKLVIIEGDLERAEERAELSESKCAELEEELKTVTNNLKSLEAQAEKYSQKEDKYEEEIKVLTDKLKEAETRAEFAERSVTKLEKSIDDLEDELYAQKLKYKAISEELDHALNDMTSI.

Residues 1-38 are disordered; the sequence is MDAIKKKMQMLKLDKENALDRAEQAEADKKAAEERSKQ. The stretch at 1–284 forms a coiled coil; that stretch reads MDAIKKKMQM…DHALNDMTSI (284 aa). Residues 12–38 show a composition bias toward basic and acidic residues; sequence KLDKENALDRAEQAEADKKAAEERSKQ.

It belongs to the tropomyosin family. As to quaternary structure, homodimer. Heterodimer of an alpha (TPM1, TPM3 or TPM4) and a beta (TPM2) chain. Interacts with HRG (via the HRR domain); the interaction contributes to the antiangiogenic properties of the histidine/proline-rich region (HRR) of HRG.

The protein localises to the cytoplasm. It is found in the cytoskeleton. Its function is as follows. Binds to actin filaments in muscle and non-muscle cells. Plays a central role, in association with the troponin complex, in the calcium dependent regulation of vertebrate striated muscle contraction. Smooth muscle contraction is regulated by interaction with caldesmon. In non-muscle cells is implicated in stabilizing cytoskeleton actin filaments. This chain is Tropomyosin alpha-1 chain (TPM1), found in Coturnix japonica (Japanese quail).